The chain runs to 258 residues: Cyclohexa-1,5-dienecarbonyl-CoA hydratase (258 aa).

Belongs to the enoyl-CoA hydratase/isomerase family.

It carries out the reaction cyclohexa-1,5-diene-1-carbonyl-CoA + H2O = 6-hydroxycyclohex-1-ene-1-carbonyl-CoA. It participates in aromatic compound metabolism; benzoyl-CoA degradation. Its function is as follows. Catalyzes the hydration of cyclohexa-1,5-diene-1-carboxyl-CoA. The chain is Cyclohexa-1,5-dienecarbonyl-CoA hydratase (dch) from Thauera aromatica.